Reading from the N-terminus, the 338-residue chain is Methionine import ATP-binding protein MetN 2 (338 aa).

The region spanning 2–242 is the ABC transporter domain; sequence IEIEKVCVDF…PQHAFTQQLV (241 aa). Residue 39–46 participates in ATP binding; the sequence is GTSGAGKS.

It belongs to the ABC transporter superfamily. Methionine importer (TC 3.A.1.24) family. As to quaternary structure, the complex is composed of two ATP-binding proteins (MetN), two transmembrane proteins (MetI) and a solute-binding protein (MetQ).

The protein resides in the cell inner membrane. The enzyme catalyses L-methionine(out) + ATP + H2O = L-methionine(in) + ADP + phosphate + H(+). It catalyses the reaction D-methionine(out) + ATP + H2O = D-methionine(in) + ADP + phosphate + H(+). Part of the ABC transporter complex MetNIQ involved in methionine import. Responsible for energy coupling to the transport system. This is Methionine import ATP-binding protein MetN 2 from Salmonella typhimurium (strain LT2 / SGSC1412 / ATCC 700720).